A 293-amino-acid chain; its full sequence is Pyridoxal 5'-phosphate synthase subunit PdxS (293 aa).

Aspartate 23 contributes to the D-ribose 5-phosphate binding site. Lysine 80 serves as the catalytic Schiff-base intermediate with D-ribose 5-phosphate. Glycine 152 is a binding site for D-ribose 5-phosphate. Residue arginine 164 participates in D-glyceraldehyde 3-phosphate binding. D-ribose 5-phosphate-binding positions include glycine 213 and glycine 234–serine 235.

This sequence belongs to the PdxS/SNZ family. As to quaternary structure, in the presence of PdxT, forms a dodecamer of heterodimers.

The catalysed reaction is aldehydo-D-ribose 5-phosphate + D-glyceraldehyde 3-phosphate + L-glutamine = pyridoxal 5'-phosphate + L-glutamate + phosphate + 3 H2O + H(+). The protein operates within cofactor biosynthesis; pyridoxal 5'-phosphate biosynthesis. Catalyzes the formation of pyridoxal 5'-phosphate from ribose 5-phosphate (RBP), glyceraldehyde 3-phosphate (G3P) and ammonia. The ammonia is provided by the PdxT subunit. Can also use ribulose 5-phosphate and dihydroxyacetone phosphate as substrates, resulting from enzyme-catalyzed isomerization of RBP and G3P, respectively. This is Pyridoxal 5'-phosphate synthase subunit PdxS from Thermus thermophilus (strain ATCC 27634 / DSM 579 / HB8).